The primary structure comprises 129 residues: MGFGKPSSFLAFSILVLCQAGSLQAQPLRSSLESLPDPAALSEKEGRLLLAALVKAYVQRKTNELEQEQEQEMEGSSLTAQKRSCNTATCVTHRLAGLLSRSGGVVKSNFVPTDVGSEAFGRRRRDLQA.

The N-terminal stretch at 1 to 25 (MGFGKPSSFLAFSILVLCQAGSLQA) is a signal peptide. A propeptide spanning residues 26–81 (QPLRSSLESLPDPAALSEKEGRLLLAALVKAYVQRKTNELEQEQEQEMEGSSLTAQ) is cleaved from the precursor. A disulfide bridge links cysteine 85 with cysteine 90. The residue at position 120 (phenylalanine 120) is a Phenylalanine amide. A propeptide spanning residues 126–129 (DLQA) is cleaved from the precursor.

The protein belongs to the calcitonin family.

Its subcellular location is the secreted. CALCB/CGRP2 is a peptide hormone that induces vasodilation mediated by the CALCRL-RAMP1 receptor complex. Dilates a variety of vessels including the coronary, cerebral and systemic vasculature. Its abundance in the CNS also points toward a neurotransmitter or neuromodulator role. In Equus caballus (Horse), this protein is Calcitonin gene-related peptide 2 (CALCB).